The primary structure comprises 610 residues: UvrABC system protein C (610 aa).

Residues 16-94 enclose the GIY-YIG domain; sequence SQPGVYRMYD…IKLYQPRYNV (79 aa). Residues 204 to 239 form the UVR domain; the sequence is DQVLTQLIARMEKASQDLAFEEAARIRDQIQAVRRV.

Belongs to the UvrC family. Interacts with UvrB in an incision complex.

It localises to the cytoplasm. Functionally, the UvrABC repair system catalyzes the recognition and processing of DNA lesions. UvrC both incises the 5' and 3' sides of the lesion. The N-terminal half is responsible for the 3' incision and the C-terminal half is responsible for the 5' incision. The chain is UvrABC system protein C from Salmonella schwarzengrund (strain CVM19633).